Here is a 1024-residue protein sequence, read N- to C-terminus: Unconventional myosin-Ig (1024 aa).

Residues 15-713 form the Myosin motor domain; that stretch reads YGKPDFVLLD…TLVTLEQSRA (699 aa). 108–115 is a binding site for ATP; the sequence is GESGAGKT. Residues 590-612 form an actin-binding region; sequence MVALVENLASKEPFYVRCIKPNE. Positions 716-745 constitute an IQ domain; the sequence is IPIIVLLLQKAWRGTLARWHCRRLRAIYTI. The region spanning 830 to 1023 is the TH1 domain; sequence GLRQDWGCQR…RSTFTLLWPS (194 aa). The tract at residues 999-1024 is disordered; the sequence is VEPRPEQPEPDFQSSRSTFTLLWPSH.

It belongs to the TRAFAC class myosin-kinesin ATPase superfamily. Myosin family. Interacts with calmodulin; via its IQ motifs. Specifically expressed in hematopoietic cells. Detected in adult tissues of the immune system such as thymus, lymph nodes and spleen, but not in brain, lung, heart, liver, small intestine, testis and kidney (at protein level). Highly expressed in T-lymphocytes; constitutes the most highly expressed class I myosin in naive CD4 and CD8 T-cells. Also present in B-lymphocytes.

It is found in the cell membrane. Its subcellular location is the cell projection. It localises to the phagocytic cup. Functionally, unconventional myosin required during immune response for detection of rare antigen-presenting cells by regulating T-cell migration. Unconventional myosins are actin-based motor molecules with ATPase activity and serve in intracellular movements. Acts as a regulator of T-cell migration by generating membrane tension, enforcing cell-intrinsic meandering search, thereby enhancing detection of rare antigens during lymph-node surveillance, enabling pathogen eradication. Also required in B-cells, where it regulates different membrane/cytoskeleton-dependent processes. Involved in Fc-gamma receptor (Fc-gamma-R) phagocytosis. This Mus musculus (Mouse) protein is Unconventional myosin-Ig (Myo1g).